The sequence spans 245 residues: uncharacterized protein (245 aa).

This is an uncharacterized protein from Mycobacterium tuberculosis (strain CDC 1551 / Oshkosh).